Consider the following 506-residue polypeptide: AMP phosphorylase (506 aa).

Residues glycine 167, 193 to 198, and threonine 202 each bind AMP; that span reads SRAITG. The Proton donor role is filled by aspartate 255. Residues serine 263 and lysine 287 each coordinate AMP.

It belongs to the thymidine/pyrimidine-nucleoside phosphorylase family. Type 2 subfamily.

The catalysed reaction is AMP + phosphate = alpha-D-ribose 1,5-bisphosphate + adenine. The enzyme catalyses CMP + phosphate = cytosine + alpha-D-ribose 1,5-bisphosphate. It carries out the reaction UMP + phosphate = alpha-D-ribose 1,5-bisphosphate + uracil. Catalyzes the conversion of AMP and phosphate to adenine and ribose 1,5-bisphosphate (R15P). Exhibits phosphorylase activity toward CMP and UMP in addition to AMP. Functions in an archaeal AMP degradation pathway, together with R15P isomerase and RubisCO. This chain is AMP phosphorylase, found in Methanosarcina barkeri (strain Fusaro / DSM 804).